We begin with the raw amino-acid sequence, 332 residues long: Geranylgeranyl pyrophosphate synthase dpasD (332 aa).

Isopentenyl diphosphate contacts are provided by lysine 55, arginine 58, and histidine 87. Mg(2+) is bound by residues aspartate 94 and aspartate 98. Arginine 103 serves as a coordination point for dimethylallyl diphosphate. An isopentenyl diphosphate-binding site is contributed by arginine 104. The dimethylallyl diphosphate site is built by lysine 181, threonine 182, and glutamine 215. Aspartate 218 is a Mg(2+) binding site. Dimethylallyl diphosphate contacts are provided by asparagine 222, lysine 232, and lysine 242.

It belongs to the FPP/GGPP synthase family. It depends on Mg(2+) as a cofactor.

The enzyme catalyses isopentenyl diphosphate + dimethylallyl diphosphate = (2E)-geranyl diphosphate + diphosphate. The catalysed reaction is isopentenyl diphosphate + (2E)-geranyl diphosphate = (2E,6E)-farnesyl diphosphate + diphosphate. It carries out the reaction isopentenyl diphosphate + (2E,6E)-farnesyl diphosphate = (2E,6E,10E)-geranylgeranyl diphosphate + diphosphate. The protein operates within secondary metabolite biosynthesis; terpenoid biosynthesis. Functionally, geranylgeranyl pyrophosphate synthase; part of the gene cluster that mediates the biosynthesis of the diterpenoid pyrones subglutinols A and B. The first step of the pathway is the synthesis of the alpha-pyrone moiety by the polyketide synthase dpasA via condensation of one acetyl-CoA starter unit with 3 malonyl-CoA units and 2 methylations. The alpha-pyrone is then combined with geranylgeranyl pyrophosphate (GGPP) formed by the GGPP synthase dpasD through the action of the prenyltransferase dpasC to yield a linear alpha-pyrone diterpenoid. Subsequent steps in the diterpenoid pyrone biosynthetic pathway involve the decalin core formation, which is initiated by the epoxidation of the C10-C11 olefin by the FAD-dependent oxidoreductase dpasE, and is followed by a cyclization cascade catalyzed by the terpene cyclase dpasB. The FAD-linked oxidoreductase dpasF is then involved in tetrahydrofuran (THF) ring formation at the C5 unit to complete the formation of subglutinols A and B. DpasF also possesses an additional catalytic ability of multi-step oxidations to generate a new DDP analog with an enone system at the C5 named FDDP A. This Apiospora sacchari (Arthrinium sacchari) protein is Geranylgeranyl pyrophosphate synthase dpasD.